Reading from the N-terminus, the 338-residue chain is Protein RecA (338 aa).

Residue 68–75 (GPESSGKT) participates in ATP binding.

It belongs to the RecA family.

It is found in the cytoplasm. Its function is as follows. Can catalyze the hydrolysis of ATP in the presence of single-stranded DNA, the ATP-dependent uptake of single-stranded DNA by duplex DNA, and the ATP-dependent hybridization of homologous single-stranded DNAs. It interacts with LexA causing its activation and leading to its autocatalytic cleavage. This is Protein RecA from Citrifermentans bemidjiense (strain ATCC BAA-1014 / DSM 16622 / JCM 12645 / Bem) (Geobacter bemidjiensis).